The following is a 113-amino-acid chain: MIGPKPTLEDIVLDLQPFPQPQPVDLMCYEQLSDSSEDEDEVDHHHNNQQQHHQHARPEVPEDGDCYRIVSDCYSCGKPLRLVVVSSHEELRVLEDLLMGTLDIVCPSCASRV.

The segment at 1 to 47 (MIGPKPTLEDIVLDLQPFPQPQPVDLMCYEQLSDSSEDEDEVDHHHN) is E7 terminal domain. Positions 26–30 (LMCYE) match the LXCXE motif; interaction with host RB1 and TMEM173/STING motif. Residues 30–62 (EQLSDSSEDEDEVDHHHNNQQQHHQHARPEVPE) form a disordered region. The segment at 73 to 109 (CYSCGKPLRLVVVSSHEELRVLEDLLMGTLDIVCPSC) is a zinc-finger region. A Nuclear export signal motif is present at residues 91–99 (LRVLEDLLM).

Belongs to the papillomaviridae E7 protein family. As to quaternary structure, homodimer. Homooligomer. Interacts with host RB1; this interaction induces dissociation of RB1-E2F1 complex thereby disrupting RB1 activity. Interacts with host EP300; this interaction represses EP300 transcriptional activity. Interacts with protein E2; this interaction inhibits E7 oncogenic activity. Interacts with host TMEM173/STING; this interaction impairs the ability of TMEM173/STING to sense cytosolic DNA and promote the production of type I interferon (IFN-alpha and IFN-beta). In terms of processing, highly phosphorylated.

Its subcellular location is the host cytoplasm. It is found in the host nucleus. Plays a role in viral genome replication by driving entry of quiescent cells into the cell cycle. Stimulation of progression from G1 to S phase allows the virus to efficiently use the cellular DNA replicating machinery to achieve viral genome replication. E7 protein has both transforming and trans-activating activities. Induces the disassembly of the E2F1 transcription factor from RB1, with subsequent transcriptional activation of E2F1-regulated S-phase genes. Interferes with host histone deacetylation mediated by HDAC1 and HDAC2, leading to transcription activation. Also plays a role in the inhibition of both antiviral and antiproliferative functions of host interferon alpha. Interaction with host TMEM173/STING impairs the ability of TMEM173/STING to sense cytosolic DNA and promote the production of type I interferon (IFN-alpha and IFN-beta). The chain is Protein E7 from Macaca mulatta (Rhesus macaque).